The primary structure comprises 353 residues: Nicotinate-nucleotide--dimethylbenzimidazole phosphoribosyltransferase (353 aa).

Glutamate 320 functions as the Proton acceptor in the catalytic mechanism.

The protein belongs to the CobT family.

It catalyses the reaction 5,6-dimethylbenzimidazole + nicotinate beta-D-ribonucleotide = alpha-ribazole 5'-phosphate + nicotinate + H(+). Its pathway is nucleoside biosynthesis; alpha-ribazole biosynthesis; alpha-ribazole from 5,6-dimethylbenzimidazole: step 1/2. Catalyzes the synthesis of alpha-ribazole-5'-phosphate from nicotinate mononucleotide (NAMN) and 5,6-dimethylbenzimidazole (DMB). This Pseudoalteromonas translucida (strain TAC 125) protein is Nicotinate-nucleotide--dimethylbenzimidazole phosphoribosyltransferase.